A 185-amino-acid polypeptide reads, in one-letter code: Small ribosomal subunit protein uS7 (185 aa).

Belongs to the universal ribosomal protein uS7 family. Part of the 30S ribosomal subunit.

Functionally, one of the primary rRNA binding proteins, it binds directly to 16S rRNA where it nucleates assembly of the head domain of the 30S subunit. Is located at the subunit interface close to the decoding center. This Methanosarcina barkeri (strain Fusaro / DSM 804) protein is Small ribosomal subunit protein uS7.